Consider the following 314-residue polypeptide: tRNA dimethylallyltransferase (314 aa).

12–19 (GPTASGKT) contributes to the ATP binding site. A substrate-binding site is contributed by 14–19 (TASGKT). Interaction with substrate tRNA regions lie at residues 37-40 (DSAL) and 162-166 (QRIIR).

The protein belongs to the IPP transferase family. Monomer. The cofactor is Mg(2+).

The catalysed reaction is adenosine(37) in tRNA + dimethylallyl diphosphate = N(6)-dimethylallyladenosine(37) in tRNA + diphosphate. Its function is as follows. Catalyzes the transfer of a dimethylallyl group onto the adenine at position 37 in tRNAs that read codons beginning with uridine, leading to the formation of N6-(dimethylallyl)adenosine (i(6)A). This Acinetobacter baumannii (strain SDF) protein is tRNA dimethylallyltransferase.